We begin with the raw amino-acid sequence, 838 residues long: Leucine--tRNA ligase 1 (838 aa).

A 'HIGH' region motif is present at residues 40–51; the sequence is PYPSGAGLHVGH. Positions 608-612 match the 'KMSKS' region motif; that stretch reads KMSKS. K611 is an ATP binding site.

Belongs to the class-I aminoacyl-tRNA synthetase family.

Its subcellular location is the cytoplasm. It catalyses the reaction tRNA(Leu) + L-leucine + ATP = L-leucyl-tRNA(Leu) + AMP + diphosphate. In Rhizobium johnstonii (strain DSM 114642 / LMG 32736 / 3841) (Rhizobium leguminosarum bv. viciae), this protein is Leucine--tRNA ligase 1.